A 227-amino-acid chain; its full sequence is MIRAILTDIEGTTSSLSFVKETLFPYARARMADFVRGHARDATVQALLADAKAAAGDPSMDDEHVIARLVRWIDEDRKITPLKALQGLIWEEGYRNRDFFGHVYDDAVRRLKAWHEQGISLYVFSSGSVHAQRLLFGHTAAGDLQPLFSGYFDTRIGAKQEPAAYSAIARELNLPPSEILFLSDIEAELDAAREAGYKTFMLVREGGAKASHHPQGADFDAIRPELL.

The protein belongs to the HAD-like hydrolase superfamily. MasA/MtnC family. As to quaternary structure, monomer. Requires Mg(2+) as cofactor.

The enzyme catalyses 5-methylsulfanyl-2,3-dioxopentyl phosphate + H2O = 1,2-dihydroxy-5-(methylsulfanyl)pent-1-en-3-one + phosphate. It functions in the pathway amino-acid biosynthesis; L-methionine biosynthesis via salvage pathway; L-methionine from S-methyl-5-thio-alpha-D-ribose 1-phosphate: step 3/6. It participates in amino-acid biosynthesis; L-methionine biosynthesis via salvage pathway; L-methionine from S-methyl-5-thio-alpha-D-ribose 1-phosphate: step 4/6. Bifunctional enzyme that catalyzes the enolization of 2,3-diketo-5-methylthiopentyl-1-phosphate (DK-MTP-1-P) into the intermediate 2-hydroxy-3-keto-5-methylthiopentenyl-1-phosphate (HK-MTPenyl-1-P), which is then dephosphorylated to form the acireductone 1,2-dihydroxy-3-keto-5-methylthiopentene (DHK-MTPene). In Methylococcus capsulatus (strain ATCC 33009 / NCIMB 11132 / Bath), this protein is Enolase-phosphatase E1.